We begin with the raw amino-acid sequence, 327 residues long: Porphobilinogen deaminase (327 aa).

Position 251 is an S-(dipyrrolylmethanemethyl)cysteine (Cys251).

This sequence belongs to the HMBS family. Requires dipyrromethane as cofactor.

It catalyses the reaction 4 porphobilinogen + H2O = hydroxymethylbilane + 4 NH4(+). It participates in porphyrin-containing compound metabolism; protoporphyrin-IX biosynthesis; coproporphyrinogen-III from 5-aminolevulinate: step 2/4. Functionally, catalyzes the tetrapolymerization of the monopyrrole porphobilinogen (PBG) into the hydroxymethylbilane pre-uroporphyrinogen in several discrete steps. The protein is Porphobilinogen deaminase (HEM3) of Saccharomyces cerevisiae (strain ATCC 204508 / S288c) (Baker's yeast).